A 411-amino-acid polypeptide reads, in one-letter code: Calmodulin-binding receptor-like cytoplasmic kinase 2 (411 aa).

Disordered regions lie at residues 1–44 (MPSR…DTTT) and 66–99 (SNYIDNSKSSSDNNIRSRRSSTGSSSVQRSYGNA). 2 stretches are compositionally biased toward low complexity: residues 16–44 (TTSSNYSNTTFTDRSFPTTPARTSTDTTT) and 66–95 (SNYIDNSKSSSDNNIRSRRSSTGSSSVQRS). Position 108 is a phosphothreonine (Thr-108). Residues 119 to 398 (FSPSFRIGQG…MKKCSEILWG (280 aa)) enclose the Protein kinase domain. ATP is bound by residues 125-133 (IGQGGFGTV) and Lys-147. Positions 134 to 159 (YKVKLRDGKTFAVKRAKKSMHDDRQG) are caM-binding. Asp-247 functions as the Proton acceptor in the catalytic mechanism. Ser-251 and Ser-283 each carry phosphoserine. A phosphothreonine mark is found at Thr-284 and Thr-289. Phosphotyrosine is present on Tyr-297.

It belongs to the protein kinase superfamily. Ser/Thr protein kinase family. Interacts with calmodulin (CaM) in a Ca(2+)-dependent manner.

The protein localises to the cytoplasm. The catalysed reaction is L-seryl-[protein] + ATP = O-phospho-L-seryl-[protein] + ADP + H(+). It catalyses the reaction L-threonyl-[protein] + ATP = O-phospho-L-threonyl-[protein] + ADP + H(+). This is Calmodulin-binding receptor-like cytoplasmic kinase 2 (CRCK2) from Arabidopsis thaliana (Mouse-ear cress).